Reading from the N-terminus, the 157-residue chain is Probable succinate transporter subunit YjjB (157 aa).

The next 4 helical transmembrane spans lie at 15–35 (ILAAIPAVGFAMVFNVPVQAL), 50–70 (MILMTSGLNIEWSTFMASMLV), 87–107 (VFTVAAVIPMFPGISAYTAMI), and 121–141 (LMITLLTNFLTASSIVGALSV).

It belongs to the ThrE exporter (TC 2.A.79) family. As to quaternary structure, the transporter is composed of YjjB and YjjP.

Its subcellular location is the cell inner membrane. In terms of biological role, involved in succinate export with YjjP. Both proteins are required for export. The sequence is that of Probable succinate transporter subunit YjjB from Shigella dysenteriae serotype 1 (strain Sd197).